Here is a 235-residue protein sequence, read N- to C-terminus: Regulator of G-protein signaling 18 (235 aa).

Serine 49 is modified (phosphoserine). Residues 86–202 enclose the RGS domain; that stretch reads SFDKLLSHRD…LKSDIYLDLM (117 aa). 2 positions are modified to phosphoserine: serine 216 and serine 218.

Expressed in peripheral leukocytes, bone marrow, platelet, spleen and fetal liver.

The protein localises to the cytoplasm. In terms of biological role, inhibits signal transduction by increasing the GTPase activity of G protein alpha subunits thereby driving them into their inactive GDP-bound form. Binds to G(i) alpha-1, G(i) alpha-2, G(i) alpha-3 and G(q) alpha. This chain is Regulator of G-protein signaling 18 (RGS18), found in Homo sapiens (Human).